A 625-amino-acid chain; its full sequence is Thrombopoietin receptor (625 aa).

An N-terminal signal peptide occupies residues 1–25; the sequence is MPSWALFMVTSCLLLALPNQAQVTS. Topologically, residues 26–482 are extracellular; sequence QDVFLLALGT…RVSTGSETAW (457 aa). The N-linked (GlcNAc...) asparagine glycan is linked to Asn-117. 2 Fibronectin type-III domains span residues 178 to 270 and 383 to 479; these read NATA…PVTV and PTPS…TGSE. The WSXWS motif motif lies at 465-469; it reads WSAWS. Residues 483–504 form a helical membrane-spanning segment; sequence ITLVTALLLVLSLSALLGLLLL. At 505–625 the chain is on the cytoplasmic side; the sequence is KWQFPAHYRR…YLPLSYWQQP (121 aa). Positions 519 to 527 match the Box 1 motif motif; the sequence is LWPSLPDLH. Residues Lys-544 and Lys-564 each participate in a glycyl lysine isopeptide (Lys-Gly) (interchain with G-Cter in ubiquitin) cross-link. Phosphotyrosine occurs at positions 616 and 621.

This sequence belongs to the type I cytokine receptor family. Type 1 subfamily. In terms of assembly, homodimer. Interacts with ATXN2L. Interacts with JAK2 and TYK2; these interactions increase MPL localization to the cell membrane. Interacts with THPO. Interacts with SHIP/INPP5D. Interacts with kinases BTK and SYK. Post-translationally, ubiquitination at Lys-544 and Lys-564 targets MPL for degradation by both the lysosomal and proteasomal pathways. The E3 ubiquitin-protein ligase CBL significantly contributes to this ubiquitination.

The protein resides in the cell membrane. It localises to the golgi apparatus. The protein localises to the cell surface. In terms of biological role, receptor for thrombopoietin that regulates hematopoietic stem cell renewal, megakaryocyte differentiation, and platelet formation. Upon activation by THPO, induces rapid tyrosine phosphorylation and activation of JAK2, providing docking sites for many signaling proteins such as STAT5, SHIP/INPP5D, GRB2, SOS1 and PI3K. In turn, These signaling cascades lead to the proliferation, survival, and differentiation of megakaryocytes, ultimately leading to increased platelet production. Acts as an inhibitor of thrombopoietin signaling by promoting protein down-regulation of full-length isoform Mpl-fl. The protein is Thrombopoietin receptor (Mpl) of Mus musculus (Mouse).